The primary structure comprises 254 residues: Small ribosomal subunit protein uS5 (254 aa).

Over residues 1-10 the composition is skewed to polar residues; it reads MSAPEAQQQK. The tract at residues 1 to 34 is disordered; the sequence is MSAPEAQQQKRGGFGGRNRGRPNRRGPRNTEEKG. At Ser-2 the chain carries N-acetylserine. An Asymmetric dimethylarginine; by HMT1; alternate modification is found at Arg-11. Arg-11 bears the Omega-N-methylarginine; by HMT1; alternate mark. Arg-17 carries the omega-N-methylarginine; by HMT1 modification. The span at 18–27 shows a compositional bias: basic residues; the sequence is NRGRPNRRGP. Lys-33 participates in a covalent cross-link: Glycyl lysine isopeptide (Lys-Gly) (interchain with G-Cter in ubiquitin). An S5 DRBM domain is found at 76 to 139; that stretch reads LQDEVMNIKP…IIAKLSVIPI (64 aa).

This sequence belongs to the universal ribosomal protein uS5 family. As to quaternary structure, component of the small ribosomal subunit (SSU). Mature yeast ribosomes consist of a small (40S) and a large (60S) subunit. The 40S small subunit contains 1 molecule of ribosomal RNA (18S rRNA) and 33 different proteins (encoded by 57 genes). The large 60S subunit contains 3 rRNA molecules (25S, 5.8S and 5S rRNA) and 46 different proteins (encoded by 81 genes). Interacts with snoRNA U3. Interacts with MPP10. Component of the ribosomal small subunit (SSU) processome composed of at least 40 protein subunits and snoRNA U3. N-terminally acetylated by acetyltransferase NatA.

It localises to the cytoplasm. It is found in the nucleus. The protein localises to the nucleolus. Its function is as follows. Component of the ribosome, a large ribonucleoprotein complex responsible for the synthesis of proteins in the cell. The small ribosomal subunit (SSU) binds messenger RNAs (mRNAs) and translates the encoded message by selecting cognate aminoacyl-transfer RNA (tRNA) molecules. The large subunit (LSU) contains the ribosomal catalytic site termed the peptidyl transferase center (PTC), which catalyzes the formation of peptide bonds, thereby polymerizing the amino acids delivered by tRNAs into a polypeptide chain. The nascent polypeptides leave the ribosome through a tunnel in the LSU and interact with protein factors that function in enzymatic processing, targeting, and the membrane insertion of nascent chains at the exit of the ribosomal tunnel. uS5 is important for the assembly and function of the 40S ribosomal subunit. Mutations in this protein affects the control of translational fidelity. Involved in nucleolar processing of pre-18S ribosomal RNA and ribosome assembly. This chain is Small ribosomal subunit protein uS5, found in Saccharomyces cerevisiae (strain ATCC 204508 / S288c) (Baker's yeast).